The sequence spans 761 residues: 5-methyltetrahydropteroyltriglutamate--homocysteine methyltransferase (761 aa).

Residues 16–19 (RELK) and K116 contribute to the 5-methyltetrahydropteroyltri-L-glutamate site. L-homocysteine-binding positions include 435-437 (IGS) and E488. Residues 435 to 437 (IGS) and E488 each bind L-methionine. 5-methyltetrahydropteroyltri-L-glutamate-binding positions include 519-520 (RC) and W565. An L-homocysteine-binding site is contributed by D603. D603 contacts L-methionine. E609 contacts 5-methyltetrahydropteroyltri-L-glutamate. Zn(2+) contacts are provided by H645, C647, and E669. The active-site Proton donor is H698. A Zn(2+)-binding site is contributed by C730.

The protein belongs to the vitamin-B12 independent methionine synthase family. The cofactor is Zn(2+).

It catalyses the reaction 5-methyltetrahydropteroyltri-L-glutamate + L-homocysteine = tetrahydropteroyltri-L-glutamate + L-methionine. It functions in the pathway amino-acid biosynthesis; L-methionine biosynthesis via de novo pathway; L-methionine from L-homocysteine (MetE route): step 1/1. Catalyzes the transfer of a methyl group from 5-methyltetrahydrofolate to homocysteine resulting in methionine formation. This Hahella chejuensis (strain KCTC 2396) protein is 5-methyltetrahydropteroyltriglutamate--homocysteine methyltransferase.